A 381-amino-acid chain; its full sequence is Creatine kinase B-type (381 aa).

S4 is subject to Phosphoserine. In terms of domain architecture, Phosphagen kinase N-terminal spans 11–98 (KLRFPAEDEF…FDPIIEERHG (88 aa)). Phosphothreonine is present on T35. A Glycyl lysine isopeptide (Lys-Gly) (interchain with G-Cter in ubiquitin) cross-link involves residue K45. V72 is a creatine binding site. Residues 96–110 (RHGGYQPSDEHKTDL) are compositionally biased toward basic and acidic residues. A disordered region spans residues 96 to 123 (RHGGYQPSDEHKTDLNPDNLQGGDDLDP). A Glycyl lysine isopeptide (Lys-Gly) (interchain with G-Cter in ubiquitin) cross-link involves residue K107. Y125 bears the Phosphotyrosine mark. The Phosphagen kinase C-terminal domain maps to 125-367 (YVLSSRVRTG…KLLIEMEQRL (243 aa)). ATP is bound by residues 128–132 (SSRVR), R130, R132, and H191. An internal MTS-like signal region spans residues 130 to 138 (RVRTGRSIR). At S199 the chain carries Phosphoserine. E232 lines the creatine pocket. R236 serves as a coordination point for ATP. A 3'-nitrotyrosine modification is found at Y269. S285 lines the creatine pocket. R292 contributes to the ATP binding site. S309 bears the Phosphoserine mark. ATP-binding positions include R320, 320–325 (RGTGGV), and D335. A Phosphothreonine modification is found at T322. K381 is covalently cross-linked (Glycyl lysine isopeptide (Lys-Gly) (interchain with G-Cter in ubiquitin)).

This sequence belongs to the ATP:guanido phosphotransferase family. Dimer of identical or non-identical chains, which can be either B (brain type) or M (muscle type). With MM being the major form in skeletal muscle and myocardium, MB existing in myocardium, and BB existing in many tissues, especially brain. Interacts with SLC12A6 (via C-terminus); the interaction may be required for SLC12A6 potassium-chloride cotransport activity. Ubiquitinated by the ECS(ASB9) complex, leading to its degradation by the proteasome. As to expression, expressed in hippocampus and corpus callosum (at protein level).

The protein resides in the cytoplasm. Its subcellular location is the cytosol. It localises to the mitochondrion. The protein localises to the cell membrane. It carries out the reaction creatine + ATP = N-phosphocreatine + ADP + H(+). Its function is as follows. Reversibly catalyzes the transfer of phosphate between ATP and various phosphogens (e.g. creatine phosphate). Creatine kinase isoenzymes play a central role in energy transduction in tissues with large, fluctuating energy demands, such as skeletal muscle, heart, brain and spermatozoa. Acts as a key regulator of adaptive thermogenesis as part of the futile creatine cycle: localizes to the mitochondria of thermogenic fat cells and acts by mediating phosphorylation of creatine to initiate a futile cycle of creatine phosphorylation and dephosphorylation. During the futile creatine cycle, creatine and N-phosphocreatine are in a futile cycle, which dissipates the high energy charge of N-phosphocreatine as heat without performing any mechanical or chemical work. This Mus musculus (Mouse) protein is Creatine kinase B-type.